Here is a 73-residue protein sequence, read N- to C-terminus: Disintegrin trigramin-gamma (73 aa).

The 73-residue stretch at 1-73 folds into the Disintegrin domain; the sequence is EAGEDCDCGS…AGCPRNPLHA (73 aa). Intrachain disulfides connect Cys-6–Cys-21, Cys-8–Cys-16, Cys-15–Cys-38, Cys-29–Cys-35, Cys-34–Cys-59, and Cys-47–Cys-66. Residues 51–53 carry the Cell attachment site motif; the sequence is RGD.

The protein belongs to the venom metalloproteinase (M12B) family. P-II subfamily. P-IIa sub-subfamily. In terms of assembly, monomer (disintegrin). Expressed by the venom gland.

Its subcellular location is the secreted. Its function is as follows. Inhibits fibrinogen interaction with platelets. Acts by binding to alpha-IIb/beta-3 (ITGA2B/ITGB3) on the platelet surface and inhibits aggregation induced by ADP, thrombin, platelet-activating factor and collagen. In Craspedocephalus gramineus (Bamboo pit viper), this protein is Disintegrin trigramin-gamma.